The chain runs to 155 residues: Ribosomal RNA large subunit methyltransferase H (155 aa).

S-adenosyl-L-methionine contacts are provided by residues Leu72, Gly103, and 122–127 (LSPLTL).

This sequence belongs to the RNA methyltransferase RlmH family. In terms of assembly, homodimer.

It is found in the cytoplasm. It catalyses the reaction pseudouridine(1915) in 23S rRNA + S-adenosyl-L-methionine = N(3)-methylpseudouridine(1915) in 23S rRNA + S-adenosyl-L-homocysteine + H(+). In terms of biological role, specifically methylates the pseudouridine at position 1915 (m3Psi1915) in 23S rRNA. The chain is Ribosomal RNA large subunit methyltransferase H from Pasteurella multocida (strain Pm70).